Consider the following 341-residue polypeptide: GTP-binding protein REM 2 (341 aa).

Over residues 1 to 13 (MHTDLDTDMDADT) the composition is skewed to acidic residues. 2 disordered regions span residues 1–72 (MHTD…SMPV) and 84–106 (VDEL…GSGE). Over residues 18–32 (LCSSSSRQASPSGTP) the composition is skewed to polar residues. A Phosphoserine modification is found at S27. A compositionally biased stretch (basic and acidic residues) spans 43 to 54 (QKPEKLLAELDR). Residues 94-105 (SSSGSSDSLGSG) are compositionally biased toward low complexity. Residues 122–129 (GESGVGKS), 230–233 (NKSD), and 261–262 (AA) contribute to the GTP site. Positions 282 to 309 (RGRGHAGGQRPEPSSPDGPAPPTRRESL) are disordered. A compositionally biased stretch (pro residues) spans 294–303 (PSSPDGPAPP). Phosphoserine is present on S296.

It belongs to the small GTPase superfamily. RGK family. In terms of tissue distribution, expressed in brain and kidney.

It is found in the cell membrane. Binds GTP saturably and exhibits a low intrinsic rate of GTP hydrolysis. The protein is GTP-binding protein REM 2 (Rem2) of Rattus norvegicus (Rat).